The primary structure comprises 186 residues: Putative thiamine-phosphate synthase 2 (186 aa).

Residues 35–39 (QLREK) and asparagine 67 each bind 4-amino-2-methyl-5-(diphosphooxymethyl)pyrimidine. Mg(2+) is bound at residue glutamate 68. A 4-amino-2-methyl-5-(diphosphooxymethyl)pyrimidine-binding site is contributed by serine 105. 131–133 (TSS) is a 2-[(2R,5Z)-2-carboxy-4-methylthiazol-5(2H)-ylidene]ethyl phosphate binding site. Residue histidine 134 coordinates 4-amino-2-methyl-5-(diphosphooxymethyl)pyrimidine. Residues glycine 161 and 181–182 (IS) each bind 2-[(2R,5Z)-2-carboxy-4-methylthiazol-5(2H)-ylidene]ethyl phosphate.

The protein belongs to the thiamine-phosphate synthase family. Mg(2+) serves as cofactor.

The catalysed reaction is 2-[(2R,5Z)-2-carboxy-4-methylthiazol-5(2H)-ylidene]ethyl phosphate + 4-amino-2-methyl-5-(diphosphooxymethyl)pyrimidine + 2 H(+) = thiamine phosphate + CO2 + diphosphate. It carries out the reaction 2-(2-carboxy-4-methylthiazol-5-yl)ethyl phosphate + 4-amino-2-methyl-5-(diphosphooxymethyl)pyrimidine + 2 H(+) = thiamine phosphate + CO2 + diphosphate. It catalyses the reaction 4-methyl-5-(2-phosphooxyethyl)-thiazole + 4-amino-2-methyl-5-(diphosphooxymethyl)pyrimidine + H(+) = thiamine phosphate + diphosphate. It functions in the pathway cofactor biosynthesis; thiamine diphosphate biosynthesis; thiamine phosphate from 4-amino-2-methyl-5-diphosphomethylpyrimidine and 4-methyl-5-(2-phosphoethyl)-thiazole: step 1/1. Functionally, condenses 4-methyl-5-(beta-hydroxyethyl)thiazole monophosphate (THZ-P) and 2-methyl-4-amino-5-hydroxymethyl pyrimidine pyrophosphate (HMP-PP) to form thiamine monophosphate (TMP). The protein is Putative thiamine-phosphate synthase 2 (thiE2) of Aquifex aeolicus (strain VF5).